The sequence spans 439 residues: Secreted aspartic protease FUS4 (439 aa).

The signal sequence occupies residues 1–22 (MLTIATLHVALQVFGAFSPSHA). The 386-residue stretch at 49–434 (YLFNVTVGSP…NFEDRSFGLA (386 aa)) folds into the Peptidase A1 domain. Residues N52 and N61 are each glycosylated (N-linked (GlcNAc...) asparagine). The active site involves D67. Residues N101, N107, and N123 are each glycosylated (N-linked (GlcNAc...) asparagine). D296 is an active-site residue. A disulfide bridge connects residues C352 and C390.

Belongs to the peptidase A1 family.

The protein localises to the secreted. Functionally, secreted aspartic protease; part of the gene cluster that mediates the biosynthesis of the mycotoxin fusarin C. Within the cluster, FUS1, FUS2, FUS8 and FUS9 are sufficient for fusarin production. The other FUS cluster members are not essential for fusarin C biosynthesis. This Gibberella moniliformis (strain M3125 / FGSC 7600) (Maize ear and stalk rot fungus) protein is Secreted aspartic protease FUS4.